Here is a 422-residue protein sequence, read N- to C-terminus: Imidazolonepropionase (422 aa).

2 residues coordinate Fe(3+): histidine 82 and histidine 84. Histidine 82 and histidine 84 together coordinate Zn(2+). Residues arginine 91, tyrosine 154, and histidine 187 each contribute to the 4-imidazolone-5-propanoate site. Tyrosine 154 contacts N-formimidoyl-L-glutamate. Residue histidine 252 coordinates Fe(3+). Histidine 252 provides a ligand contact to Zn(2+). Glutamate 255 serves as a coordination point for 4-imidazolone-5-propanoate. Aspartate 327 is a binding site for Fe(3+). A Zn(2+)-binding site is contributed by aspartate 327. N-formimidoyl-L-glutamate-binding residues include asparagine 329 and glycine 331. Serine 332 contacts 4-imidazolone-5-propanoate.

This sequence belongs to the metallo-dependent hydrolases superfamily. HutI family. Zn(2+) is required as a cofactor. Requires Fe(3+) as cofactor.

It localises to the cytoplasm. It carries out the reaction 4-imidazolone-5-propanoate + H2O = N-formimidoyl-L-glutamate. Its pathway is amino-acid degradation; L-histidine degradation into L-glutamate; N-formimidoyl-L-glutamate from L-histidine: step 3/3. In terms of biological role, catalyzes the hydrolytic cleavage of the carbon-nitrogen bond in imidazolone-5-propanoate to yield N-formimidoyl-L-glutamate. It is the third step in the universal histidine degradation pathway. The sequence is that of Imidazolonepropionase from Alkaliphilus oremlandii (strain OhILAs) (Clostridium oremlandii (strain OhILAs)).